Consider the following 428-residue polypeptide: Trigger factor (428 aa).

A PPIase FKBP-type domain is found at 166–250; that stretch reads GDIVTFDFKG…IKNIKEKILP (85 aa).

This sequence belongs to the FKBP-type PPIase family. Tig subfamily.

It localises to the cytoplasm. The catalysed reaction is [protein]-peptidylproline (omega=180) = [protein]-peptidylproline (omega=0). Functionally, involved in protein export. Acts as a chaperone by maintaining the newly synthesized protein in an open conformation. Functions as a peptidyl-prolyl cis-trans isomerase. This Mycoplasma mycoides subsp. mycoides SC (strain CCUG 32753 / NCTC 10114 / PG1) protein is Trigger factor.